A 433-amino-acid polypeptide reads, in one-letter code: Mitochondrial inner membrane protein OXA1L (433 aa).

Topologically, residues 1–108 are mitochondrial intermembrane; sequence MARNLVCGRW…QCATEPSFTE (108 aa). The helical transmembrane segment at 109-129 threads the bilayer; it reads LGLGSYTPVGLIQNLLEYIHV. At 130 to 134 the chain is on the mitochondrial matrix side; it reads DLGLP. Residues 135 to 155 form a helical membrane-spanning segment; sequence WWGAIATCTVLARCLVFPLIV. The Mitochondrial intermembrane portion of the chain corresponds to 156-207; sequence KGQREAAKIHNHMPEMQKFSARIREAKLAGDQAEFYKATIEMTRYQKKHDIK. A helical transmembrane segment spans residues 208 to 228; it reads LLRPLILPLTQAPVFISFFIA. Residues 229 to 255 are Mitochondrial matrix-facing; that stretch reads LREMANLPVPSLQTGGLWWFQDLTVSD. Residues 256–276 form a helical membrane-spanning segment; sequence PIYVLPLVVTATMWCVLELGA. The Mitochondrial intermembrane portion of the chain corresponds to 277–293; that stretch reads ETGVQSNDLQFMRNIIR. Residues 294–314 form a helical membrane-spanning segment; sequence VMPLVVLPVTIHFPSAVFMYW. Over 315 to 433 the chain is Mitochondrial matrix; the sequence is LSSNVFSLCQ…AKKPWQDTLG (119 aa). Position 359 is a phosphoserine (Ser-359). 2 positions are modified to phosphothreonine: Thr-395 and Thr-397. The disordered stretch occupies residues 397-433; it reads THNPLLQHDPSHPPKAPNSNNSSIKANAKKPWQDTLG. A compositionally biased stretch (low complexity) spans 413–426; it reads PNSNNSSIKANAKK.

Belongs to the OXA1/ALB3/YidC family. As to quaternary structure, monomer; predominantly monomeric at low salt concentrations. Homooligomer; predominantly homooligomeric at high salt concentrations. Associates with the mitochondrial ribosome. Associates preferentially as a dimer with the large ribosomal subunit 39S of the mitochondrial ribosome. Interacts with OXA1L; promoting cotranslational quality control in mitochondria.

The protein resides in the mitochondrion inner membrane. In terms of biological role, mitochondrial membrane insertase that mediates the cotranslational insertion of integral membrane proteins into the mitochondrial inner membrane. Essential for the activity and assembly of cytochrome oxidase. Required for the correct biogenesis of ATP synthase and complex I in mitochondria. The chain is Mitochondrial inner membrane protein OXA1L (Oxa1l) from Mus musculus (Mouse).